Here is a 229-residue protein sequence, read N- to C-terminus: NAD(P)H-quinone oxidoreductase subunit K, chloroplastic (229 aa).

Residues C43, C44, C108, and C139 each coordinate [4Fe-4S] cluster.

Belongs to the complex I 20 kDa subunit family. NDH is composed of at least 16 different subunits, 5 of which are encoded in the nucleus. [4Fe-4S] cluster serves as cofactor.

It localises to the plastid. The protein localises to the chloroplast thylakoid membrane. It catalyses the reaction a plastoquinone + NADH + (n+1) H(+)(in) = a plastoquinol + NAD(+) + n H(+)(out). The enzyme catalyses a plastoquinone + NADPH + (n+1) H(+)(in) = a plastoquinol + NADP(+) + n H(+)(out). NDH shuttles electrons from NAD(P)H:plastoquinone, via FMN and iron-sulfur (Fe-S) centers, to quinones in the photosynthetic chain and possibly in a chloroplast respiratory chain. The immediate electron acceptor for the enzyme in this species is believed to be plastoquinone. Couples the redox reaction to proton translocation, and thus conserves the redox energy in a proton gradient. The polypeptide is NAD(P)H-quinone oxidoreductase subunit K, chloroplastic (Coffea arabica (Arabian coffee)).